The following is a 375-amino-acid chain: Growth/differentiation factor 8 (375 aa).

The N-terminal stretch at 1–18 (MQKLQISVYIYLFMLIVA) is a signal peptide. Positions 19-266 (GPVDLNENSE…VTDTPKRSRR (248 aa)) are excised as a propeptide. N-linked (GlcNAc...) asparagine glycans are attached at residues N47 and N71. Cystine bridges form between C272–C282, C281–C340, C309–C372, and C313–C374.

The protein belongs to the TGF-beta family. As to quaternary structure, homodimer; disulfide-linked. Interacts with WFIKKN2, leading to inhibit its activity. Interacts with FSTL3. Synthesized as large precursor molecule that undergoes proteolytic cleavage to generate an N-terminal propeptide and a disulfide linked C-terminal dimer, which is the biologically active molecule. The circulating form consists of a latent complex of the C-terminal dimer and other proteins, including its propeptide, which maintain the C-terminal dimer in a latent, inactive state. Ligand activation requires additional cleavage of the prodomain by a tolloid-like metalloproteinase.

Its subcellular location is the secreted. Its function is as follows. Acts specifically as a negative regulator of skeletal muscle growth. The polypeptide is Growth/differentiation factor 8 (MSTN) (Bos gaurus (Seladang)).